Here is a 640-residue protein sequence, read N- to C-terminus: Threonine--tRNA ligase (640 aa).

The 61-residue stretch at 1–61 (MPIITLPDGS…DHDATLQIIT (61 aa)) folds into the TGS domain. The tract at residues 242–533 (DHRKLGKRLD…LIEHYEGAFP (292 aa)) is catalytic. The Zn(2+) site is built by Cys-333, His-384, and His-510.

The protein belongs to the class-II aminoacyl-tRNA synthetase family. Homodimer. Zn(2+) is required as a cofactor.

The protein resides in the cytoplasm. The catalysed reaction is tRNA(Thr) + L-threonine + ATP = L-threonyl-tRNA(Thr) + AMP + diphosphate + H(+). Functionally, catalyzes the attachment of threonine to tRNA(Thr) in a two-step reaction: L-threonine is first activated by ATP to form Thr-AMP and then transferred to the acceptor end of tRNA(Thr). Also edits incorrectly charged L-seryl-tRNA(Thr). In Azotobacter vinelandii (strain DJ / ATCC BAA-1303), this protein is Threonine--tRNA ligase.